Here is a 361-residue protein sequence, read N- to C-terminus: Glucose 1-dehydrogenase (361 aa).

Cysteine 41 lines the Zn(2+) pocket. Threonine 43 is a binding site for substrate. Zn(2+) is bound by residues histidine 68 and glutamate 69. Residues glutamate 119, glutamate 156, and asparagine 160 each contribute to the substrate site. Glutamate 156 lines the Zn(2+) pocket. Residues 216-218 (NRH), 275-277 (FGT), 304-306 (SVD), and lysine 349 contribute to the NADP(+) site. A substrate-binding site is contributed by aspartate 306.

This sequence belongs to the zinc-containing alcohol dehydrogenase family. Glucose 1-dehydrogenase subfamily. In terms of assembly, homotetramer. The cofactor is Zn(2+).

It catalyses the reaction D-glucose + NAD(+) = D-glucono-1,5-lactone + NADH + H(+). It carries out the reaction D-glucose + NADP(+) = D-glucono-1,5-lactone + NADPH + H(+). The catalysed reaction is D-galactose + NAD(+) = D-galactono-1,4-lactone + NADH + H(+). The enzyme catalyses D-galactose + NADP(+) = D-galactono-1,5-lactone + NADPH + H(+). Its function is as follows. Catalyzes the NAD(P)(+)-dependent oxidation of D-glucose to D-gluconate via gluconolactone. Is also significantly active with galactose as substrate, but not with mannose or glucose 6-phosphate. Can utilize both NAD(+) and NADP(+) as electron acceptor, with a marked preference for NADP(+). Physiologically, may be involved in the degradation of both glucose and galactose through a non-phosphorylative variant of the Entner-Doudoroff pathway. In Thermoplasma acidophilum (strain ATCC 25905 / DSM 1728 / JCM 9062 / NBRC 15155 / AMRC-C165), this protein is Glucose 1-dehydrogenase.